Here is a 352-residue protein sequence, read N- to C-terminus: Photosystem II D2 protein (352 aa).

Residues 40 to 60 (CAYLALGGWLTGTTFVTSWYT) form a helical membrane-spanning segment. Position 117 (His117) interacts with chlorophyll a. A helical membrane pass occupies residues 124-140 (GFMLRQFEIARLVGVRP). Gln129 and Asn142 together coordinate pheophytin a. Residues 152-165 (VFVSVFLIYPLGQS) traverse the membrane as a helical segment. A chlorophyll a-binding site is contributed by His197. A helical transmembrane segment spans residues 207 to 227 (GALLCAIHGATVENTLFQDGE). A plastoquinone is bound by residues His214 and Phe261. His214 serves as a coordination point for Fe cation. His268 contributes to the Fe cation binding site. The helical transmembrane segment at 278-294 (GLWMSSIGVVGLALNLR) threads the bilayer.

Belongs to the reaction center PufL/M/PsbA/D family. PSII is composed of 1 copy each of membrane proteins PsbA, PsbB, PsbC, PsbD, PsbE, PsbF, PsbH, PsbI, PsbJ, PsbK, PsbL, PsbM, PsbT, PsbX, PsbY, PsbZ, Psb30/Ycf12, peripheral proteins PsbO, CyanoQ (PsbQ), PsbU, PsbV and a large number of cofactors. It forms dimeric complexes. Requires The D1/D2 heterodimer binds P680, chlorophylls that are the primary electron donor of PSII, and subsequent electron acceptors. It shares a non-heme iron and each subunit binds pheophytin, quinone, additional chlorophylls, carotenoids and lipids. There is also a Cl(-1) ion associated with D1 and D2, which is required for oxygen evolution. The PSII complex binds additional chlorophylls, carotenoids and specific lipids. as cofactor.

The protein localises to the cellular thylakoid membrane. The catalysed reaction is 2 a plastoquinone + 4 hnu + 2 H2O = 2 a plastoquinol + O2. Its function is as follows. Photosystem II (PSII) is a light-driven water:plastoquinone oxidoreductase that uses light energy to abstract electrons from H(2)O, generating O(2) and a proton gradient subsequently used for ATP formation. It consists of a core antenna complex that captures photons, and an electron transfer chain that converts photonic excitation into a charge separation. The D1/D2 (PsbA/PsbD) reaction center heterodimer binds P680, the primary electron donor of PSII as well as several subsequent electron acceptors. D2 is needed for assembly of a stable PSII complex. This Synechococcus sp. (strain JA-2-3B'a(2-13)) (Cyanobacteria bacterium Yellowstone B-Prime) protein is Photosystem II D2 protein.